Reading from the N-terminus, the 306-residue chain is Non-specific ribonucleoside hydrolase RihC (306 aa).

The active site involves His235.

The protein belongs to the IUNH family. RihC subfamily.

Functionally, hydrolyzes both purine and pyrimidine ribonucleosides with a broad-substrate specificity. In Salmonella agona (strain SL483), this protein is Non-specific ribonucleoside hydrolase RihC.